Consider the following 579-residue polypeptide: MSRFMHFYKSPVPLVLQAHKKNCLVYTNLRTRRLRLLAQLNQREKELKNQDFRVGHEKVINTIDEIRTFLVDNHDDIIESIDGVIRTLRDIRPNEQVSSSTTTGHNNTTGTPTQSVVSGTGAVTGTGGTSSVAPDANMVADKTVTITMADKPFEYRDSFRDEFIATMYNATLRSYTMGDWYSKLKQKIYDEERYRRRFKVTHPESPAISYELVCGQVQILDLVTVYPTTDIVITDIQSAICILWTLYNGILNTTLDLSVTFEEVFEKVPGMLDVLEAEIKKENGNTTLFGTYSFADNEDIVFYNPPKDKRYSPRTFENNVIVRLLYRLRCIQNMPNDPLGAAAQSNLGIGWDEDRLFRVCRKLLTGIVQDVPIFLHKQYYLRSGCTCISALLYVKCFLDSTSVFSPSDRKFSLDTFLPNANTYVDASDYRGRNIKNFSFLWKKYVTQLYKDRPSITFSGIFPGAVLFSIAYSVSNNWLGPGHVQRPHPNARTVKLQLLHNQPLYSYLWVQHRVPRHPLEVLKAHDRALFYFEYGIHLLLNQPISFTTHRNTLKRQFNVTDVYELCYFFVLGFVPVELII.

The interaction with major capsid protein/MCP stretch occupies residues 1–46 (MSRFMHFYKSPVPLVLQAHKKNCLVYTNLRTRRLRLLAQLNQREKE). The tract at residues 92–134 (RPNEQVSSSTTTGHNNTTGTPTQSVVSGTGAVTGTGGTSSVAP) is disordered. The segment covering 101–121 (TTTGHNNTTGTPTQSVVSGTG) has biased composition (low complexity).

Belongs to the herpesviridae CVC2 protein family. In terms of assembly, heterodimerizes with CVC1. Interacts with major capsid protein/MCP and triplex capsid protein 1/TRX1 at the pentamer vertices. Interacts with the large tegument protein/LTP.

It localises to the virion. It is found in the host nucleus. In terms of biological role, capsid vertex-specific component that plays a role during viral DNA encapsidation, assuring correct genome cleavage and presumably stabilizing capsids that contain full-length viral genomes. Participates in the interaction between the capsid and the tegument through interaction with the large tegument protein/LTP. This Elephantid herpesvirus 1 (isolate Asian elephant/Berlin/Kiba/1998) (EIHV-1) protein is Capsid vertex component 2.